Consider the following 384-residue polypeptide: Transcription factor TGA3 (384 aa).

Disordered regions lie at residues 36–70 and 76–95; these read KSDI…NNRV and YNNS…EDRI. Residues 39–55 show a composition bias toward low complexity; sequence INNITSNQNNNQSSSTT. Residues 58 to 68 show a composition bias toward basic and acidic residues; sequence VDARPEADDNN. Positions 76–88 are enriched in polar residues; that stretch reads YNNSLEAEPSSNN. The bZIP domain occupies 96–138; that stretch reads NDKMKRRLAQNREAARKSRLRKKAHVQQLEESRLKLSQLEQEL. The interval 98 to 118 is basic motif; sequence KMKRRLAQNREAARKSRLRKK. The Nuclear localization signal motif lies at 99-106; the sequence is MKRRLAQN. The stretch at 117-144 forms a coiled coil; sequence KKAHVQQLEESRLKLSQLEQELVRARQQ. The leucine-zipper stretch occupies residues 124–138; sequence LEESRLKLSQLEQEL. The DOG1 domain occupies 167–379; sequence IAAFEMEYTH…RALSSLWAAR (213 aa). Lys-219, Arg-236, and Phe-249 together coordinate hexadecanoate. Positions 267-296 form a coiled coil; that stretch reads DQQLLEVRNLQQSSQQAEEALSQGLDKLQQ.

Belongs to the bZIP family. As to quaternary structure, binds DNA as a dimer. Interacts with NPR3, NPR4 and sumoylated NPR1. Interacts with GRXC7/ROXY1. As to expression, expressed in the whole plant.

It is found in the nucleus. In terms of biological role, transcriptional activator that binds specifically to the DNA sequence 5'-TGACG-3'. Recognizes ocs elements like the as-1 motif of the cauliflower mosaic virus 35S promoter. Binding to the as-1-like cis elements mediate auxin- and salicylic acid-inducible transcription. Required to induce the systemic acquired resistance (SAR) via the regulation of pathogenesis-related genes expression. Binding to the as-1 element of PR-1 promoter is salicylic acid-inducible and mediated by sumoylated NPR1. Could also bind to the Hex-motif (5'-TGACGTGG-3') another cis-acting element found in plant histone promoters. The protein is Transcription factor TGA3 of Arabidopsis thaliana (Mouse-ear cress).